A 425-amino-acid chain; its full sequence is Formyl-CoA:oxalate CoA-transferase (425 aa).

Residues 17–18, R38, 72–75, 96–98, R104, and 136–139 each bind CoA; these read QS, LDTK, NFG, and KVYE. D168 (nucleophile) is an active-site residue. A substrate-binding site is contributed by 247 to 249; that stretch reads GGQ.

The protein belongs to the CoA-transferase III family. Frc subfamily. In terms of assembly, homodimer.

The enzyme catalyses formyl-CoA + oxalate = oxalyl-CoA + formate. It functions in the pathway metabolic intermediate degradation; oxalate degradation; CO(2) and formate from oxalate: step 1/2. Involved in the catabolism of oxalate and in the adapatation to low pH via the induction of the oxalate-dependent acid tolerance response (ATR). Catalyzes the transfer of the CoA moiety from formyl-CoA to oxalate. This Rhodopseudomonas palustris (strain HaA2) protein is Formyl-CoA:oxalate CoA-transferase.